Consider the following 234-residue polypeptide: UPF0173 metal-dependent hydrolase RL2074 (234 aa).

This sequence belongs to the UPF0173 family.

The polypeptide is UPF0173 metal-dependent hydrolase RL2074 (Rhizobium johnstonii (strain DSM 114642 / LMG 32736 / 3841) (Rhizobium leguminosarum bv. viciae)).